Reading from the N-terminus, the 281-residue chain is Cytochrome bc1 complex cytochrome c subunit (281 aa).

A helical transmembrane segment spans residues 17-37; sequence AAGAMALAVGLTGAGILVNAV. 2 Cytochrome c domains span residues 52-132 and 162-240; these read ALIQ…EANG and ADVA…KSAK. Residues Cys-65, Cys-68, His-69, Cys-175, Cys-178, and His-179 each coordinate heme c. A helical membrane pass occupies residues 259–279; the sequence is GMMMWLVGIVVLVAAAMWIGS.

The cytochrome bc1 complex is composed of a cytochrome b (QcrB), the Rieske iron-sulfur protein (QcrA) and a diheme cytochrome c (QcrC) subunit. The bc1 complex forms a supercomplex with cytochrome c oxidase (cytochrome aa3). Post-translationally, binds 2 heme c groups covalently per subunit.

Its subcellular location is the cell membrane. It catalyses the reaction a quinol + 2 Fe(III)-[cytochrome c](out) = a quinone + 2 Fe(II)-[cytochrome c](out) + 2 H(+)(out). Cytochrome c1 subunit of the cytochrome bc1 complex, an essential component of the respiratory electron transport chain required for ATP synthesis. The bc1 complex catalyzes the oxidation of menaquinol and the reduction of cytochrome c in the respiratory chain. The bc1 complex operates through a Q-cycle mechanism that couples electron transfer to generation of the proton gradient that drives ATP synthesis. This Corynebacterium diphtheriae (strain ATCC 700971 / NCTC 13129 / Biotype gravis) protein is Cytochrome bc1 complex cytochrome c subunit (qcrC).